The following is a 193-amino-acid chain: Acyl carrier protein phosphodiesterase (193 aa).

The protein belongs to the AcpH family.

The enzyme catalyses holo-[ACP] + H2O = apo-[ACP] + (R)-4'-phosphopantetheine + H(+). In terms of biological role, converts holo-ACP to apo-ACP by hydrolytic cleavage of the phosphopantetheine prosthetic group from ACP. The protein is Acyl carrier protein phosphodiesterase of Escherichia coli O7:K1 (strain IAI39 / ExPEC).